We begin with the raw amino-acid sequence, 400 residues long: Ribose-phosphate pyrophosphokinase 2, chloroplastic (400 aa).

The transit peptide at 1–44 (MASLALTSPPSVKIPSYLSSSSSSLFSRSSISFRTTESRSRICV) directs the protein to the chloroplast. Residues aspartate 214, histidine 216, aspartate 225, and aspartate 229 each contribute to the Mg(2+) site. Positions 300–315 (GKVAVMVDDIIDTAGT) are binding of phosphoribosylpyrophosphate.

Belongs to the ribose-phosphate pyrophosphokinase family.

The protein resides in the plastid. It localises to the chloroplast. It carries out the reaction D-ribose 5-phosphate + ATP = 5-phospho-alpha-D-ribose 1-diphosphate + AMP + H(+). This is Ribose-phosphate pyrophosphokinase 2, chloroplastic (PRS2) from Arabidopsis thaliana (Mouse-ear cress).